The primary structure comprises 1118 residues: Cytospin-A (1118 aa).

4 disordered regions span residues 1–63 (MKKA…AGMA), 75–176 (KKST…NQIS), 294–324 (SLSP…GSVE), and 359–391 (SSDD…NASE). Residues 80–90 (SSAAPSAPAPA) show a composition bias toward low complexity. Over residues 93–117 (ISENKSKISTGTSSSAKRSTSAGNK) the composition is skewed to polar residues. Positions 120–131 (SSTRERLRERTR) are enriched in basic and acidic residues. Residues 133–145 (NQSKKLPSVSQGA) are compositionally biased toward polar residues. Positions 158–171 (TAAEGDIRMSKSKS) are enriched in basic and acidic residues. Residues 168-281 (KSKSDNQISD…LNALGFSLEQ (114 aa)) are a coiled coil. Positions 294 to 304 (SLSPEITPGNQ) are enriched in polar residues. The span at 359–373 (SSDDALDAPSSSESE) shows a compositional bias: low complexity. A phosphoserine mark is found at serine 385, serine 386, and serine 390. 2 coiled-coil regions span residues 395–450 (ACLT…MESL) and 488–808 (RYME…RGRV). Serine 869, serine 882, and serine 888 each carry phosphoserine. Positions 921–999 (TSSTSRPASL…STRSRIREER (79 aa)) are disordered. Basic and acidic residues predominate over residues 947-957 (RSSEEMKRDIS). The span at 972-992 (TTSPQLSLSSSPTASVTPSTR) shows a compositional bias: low complexity. The region spanning 1012-1117 (GSKRNALLKW…YVTAIYKYFE (106 aa)) is the Calponin-homology (CH) domain.

This sequence belongs to the cytospin-A family. In terms of assembly, may interact with both microtubules and actin cytoskeleton.

It is found in the cytoplasm. Its subcellular location is the cytoskeleton. It localises to the spindle. The protein localises to the cell junction. The protein resides in the gap junction. Functionally, involved in cytokinesis and spindle organization. May play a role in actin cytoskeleton organization and microtubule stabilization and hence required for proper cell adhesion and migration. This chain is Cytospin-A (Specc1l), found in Mus musculus (Mouse).